The following is a 221-amino-acid chain: Pyridoxal phosphate homeostasis protein (221 aa).

Lys26 is subject to N6-(pyridoxal phosphate)lysine.

The protein belongs to the pyridoxal phosphate-binding protein YggS/PROSC family.

Functionally, pyridoxal 5'-phosphate (PLP)-binding protein, which is involved in PLP homeostasis. The chain is Pyridoxal phosphate homeostasis protein from Corynebacterium glutamicum (strain ATCC 13032 / DSM 20300 / JCM 1318 / BCRC 11384 / CCUG 27702 / LMG 3730 / NBRC 12168 / NCIMB 10025 / NRRL B-2784 / 534).